The sequence spans 369 residues: tRNA/tmRNA (uracil-C(5))-methyltransferase (369 aa).

S-adenosyl-L-methionine-binding residues include Gln190, Tyr218, Asn223, Glu239, and Asp301. Catalysis depends on Cys326, which acts as the Nucleophile. Residue Glu360 is the Proton acceptor of the active site.

It belongs to the class I-like SAM-binding methyltransferase superfamily. RNA M5U methyltransferase family. TrmA subfamily.

The enzyme catalyses uridine(54) in tRNA + S-adenosyl-L-methionine = 5-methyluridine(54) in tRNA + S-adenosyl-L-homocysteine + H(+). The catalysed reaction is uridine(341) in tmRNA + S-adenosyl-L-methionine = 5-methyluridine(341) in tmRNA + S-adenosyl-L-homocysteine + H(+). Dual-specificity methyltransferase that catalyzes the formation of 5-methyluridine at position 54 (m5U54) in all tRNAs, and that of position 341 (m5U341) in tmRNA (transfer-mRNA). This is tRNA/tmRNA (uracil-C(5))-methyltransferase from Vibrio vulnificus (strain CMCP6).